A 94-amino-acid chain; its full sequence is Integration host factor subunit beta (94 aa).

Belongs to the bacterial histone-like protein family. Heterodimer of an alpha and a beta chain.

Functionally, this protein is one of the two subunits of integration host factor, a specific DNA-binding protein that functions in genetic recombination as well as in transcriptional and translational control. The sequence is that of Integration host factor subunit beta from Salmonella arizonae (strain ATCC BAA-731 / CDC346-86 / RSK2980).